Consider the following 206-residue polypeptide: Small ribosomal subunit protein uS4 (206 aa).

Positions 96–156 constitute an S4 RNA-binding domain; the sequence is TRLDNVVYRM…EKSKTQARII (61 aa).

It belongs to the universal ribosomal protein uS4 family. As to quaternary structure, part of the 30S ribosomal subunit. Contacts protein S5. The interaction surface between S4 and S5 is involved in control of translational fidelity.

In terms of biological role, one of the primary rRNA binding proteins, it binds directly to 16S rRNA where it nucleates assembly of the body of the 30S subunit. Functionally, with S5 and S12 plays an important role in translational accuracy. The chain is Small ribosomal subunit protein uS4 from Colwellia psychrerythraea (strain 34H / ATCC BAA-681) (Vibrio psychroerythus).